Here is a 302-residue protein sequence, read N- to C-terminus: MDVKVKNRDFWYSLHGQVPGMLDWDMGNEFFLPCTMDQCSFAEQSLAKYKIQLTKPPALPQKKKSNFDDDGPPAEPSLWMWVNPNIVCPINSKEAPNTIHKILPSAPFPQTGESDYLGTQRMVQSLSVLHTEHHQQQKLLIYSTAPDFIEEETKEQECTSSKKYSKKHTVCHGPHREKESWPRPPLNYSHLVALALKSSPSCGLNVQQIYNFTRQHFPYFRTAPEGWKNTIRHNLCSLTCFEKVPVDLEDEPDGKPRSFLWKLTDEGNRFFQEDTRVLAYARRESIKQSMRQPELIDLLFHL.

The fork-head DNA-binding region spans Arg-183 to Ser-285.

The protein resides in the nucleus. This Mus musculus (Mouse) protein is Forkhead box protein R2 (Foxr2).